The primary structure comprises 471 residues: Glutamate--tRNA ligase (471 aa).

The 'HIGH' region motif lies at 9–19; that stretch reads PSPTGYLHVGG. Zn(2+) contacts are provided by Cys-98, Cys-100, Cys-125, and His-127. The 'KMSKS' region signature appears at 237–241; it reads KLSKR. Residue Lys-240 coordinates ATP.

It belongs to the class-I aminoacyl-tRNA synthetase family. Glutamate--tRNA ligase type 1 subfamily. As to quaternary structure, monomer. Zn(2+) serves as cofactor.

The protein localises to the cytoplasm. The enzyme catalyses tRNA(Glu) + L-glutamate + ATP = L-glutamyl-tRNA(Glu) + AMP + diphosphate. In terms of biological role, catalyzes the attachment of glutamate to tRNA(Glu) in a two-step reaction: glutamate is first activated by ATP to form Glu-AMP and then transferred to the acceptor end of tRNA(Glu). This chain is Glutamate--tRNA ligase, found in Salmonella schwarzengrund (strain CVM19633).